We begin with the raw amino-acid sequence, 254 residues long: Enolase-phosphatase E1 (254 aa).

Mg(2+) is bound by residues Asp13 and Glu15. Residues Ser127–Ser128 and Lys173 contribute to the substrate site. Asp200 serves as a coordination point for Mg(2+).

The protein belongs to the HAD-like hydrolase superfamily. MasA/MtnC family. Monomer. Requires Mg(2+) as cofactor.

It is found in the cytoplasm. The protein resides in the nucleus. The catalysed reaction is 5-methylsulfanyl-2,3-dioxopentyl phosphate + H2O = 1,2-dihydroxy-5-(methylsulfanyl)pent-1-en-3-one + phosphate. It functions in the pathway amino-acid biosynthesis; L-methionine biosynthesis via salvage pathway; L-methionine from S-methyl-5-thio-alpha-D-ribose 1-phosphate: step 3/6. It participates in amino-acid biosynthesis; L-methionine biosynthesis via salvage pathway; L-methionine from S-methyl-5-thio-alpha-D-ribose 1-phosphate: step 4/6. Its function is as follows. Bifunctional enzyme that catalyzes the enolization of 2,3-diketo-5-methylthiopentyl-1-phosphate (DK-MTP-1-P) into the intermediate 2-hydroxy-3-keto-5-methylthiopentenyl-1-phosphate (HK-MTPenyl-1-P), which is then dephosphorylated to form the acireductone 1,2-dihydroxy-3-keto-5-methylthiopentene (DHK-MTPene). The protein is Enolase-phosphatase E1 (utr4) of Sclerotinia sclerotiorum (strain ATCC 18683 / 1980 / Ss-1) (White mold).